A 341-amino-acid polypeptide reads, in one-letter code: GTP-binding protein GTR2 (341 aa).

Residues Ser-23, Ser-24, Ser-43, His-124, and Asp-127 each coordinate GTP.

The protein belongs to the GTR/RAG GTP-binding protein family. Heterodimer; with GTR1. Component of the GSE complex composed of GTR1, GTR2, SLM4, MEH1 and LTV1. Component of the EGO complex, at least composed of GTR2, SLM4 and MEH1. Interacts with GTR1; the interaction is direct.

It localises to the vacuole membrane. The catalysed reaction is GTP + H2O = GDP + phosphate + H(+). Functionally, GTPase involved in activation of the TORC1 signaling pathway, which promotes growth and represses autophagy in nutrient-rich conditions. Also required for TORC1 inactivation during nitrogen starvation. Required for intracellular sorting of GAP1 out of the endosome. Involved in the regulation of microautophagy. The polypeptide is GTP-binding protein GTR2 (Saccharomyces cerevisiae (strain ATCC 204508 / S288c) (Baker's yeast)).